The primary structure comprises 256 residues: tRNA (guanine-N(7)-)-methyltransferase (256 aa).

Residues 1–25 form a disordered region; sequence MVATGGQAQDQSQNQEPDVLNPTSA. S-adenosyl-L-methionine-binding positions include Gly79, 102–103, 137–138, and Leu157; these read EI and NA. The active site involves Asp160. 235–237 is a binding site for S-adenosyl-L-methionine; sequence SEE.

This sequence belongs to the class I-like SAM-binding methyltransferase superfamily. TrmB family.

It localises to the nucleus. It catalyses the reaction guanosine(46) in tRNA + S-adenosyl-L-methionine = N(7)-methylguanosine(46) in tRNA + S-adenosyl-L-homocysteine. The protein operates within tRNA modification; N(7)-methylguanine-tRNA biosynthesis. Its function is as follows. Catalyzes the formation of N(7)-methylguanine at position 46 (m7G46) in tRNA. The protein is tRNA (guanine-N(7)-)-methyltransferase of Drosophila simulans (Fruit fly).